A 323-amino-acid chain; its full sequence is MPSNSIFGGAAQAAPPSEALPVICLAGPTGSGKTAAALAVAEALGGEVINADSRQVYADFPRITAQPSAEELACCPHHLYGFLPTAQKISAGRWAAQAQATARQILSRGKIPLLVGGTGLYFQTLLHGTAEIPPVDPALTAAFTARLEDVGSQAMHAELARVDPDYATRIHPNDRQRIVRALEVHAATGKPFTWWHKHAMSRPPCNGPLLVLDAPLPWLEPRLARRLDMMLESGAMDEAAAALKNCDDDDAPGWTGIGCAEALAFLRGRLGFDACRDLWLRNTRAYAKRQLTWFRARPEAVWLPPDNVDAVVKAAGVRLPAGV.

An ATP-binding site is contributed by 27–34 (GPTGSGKT). 29–34 (TGSGKT) contributes to the substrate binding site. Interaction with substrate tRNA stretches follow at residues 52–55 (DSRQ) and 176–180 (QRIVR).

The protein belongs to the IPP transferase family. In terms of assembly, monomer. Mg(2+) serves as cofactor.

It carries out the reaction adenosine(37) in tRNA + dimethylallyl diphosphate = N(6)-dimethylallyladenosine(37) in tRNA + diphosphate. Catalyzes the transfer of a dimethylallyl group onto the adenine at position 37 in tRNAs that read codons beginning with uridine, leading to the formation of N6-(dimethylallyl)adenosine (i(6)A). The sequence is that of tRNA dimethylallyltransferase from Desulfovibrio desulfuricans (strain ATCC 27774 / DSM 6949 / MB).